An 86-amino-acid chain; its full sequence is MLCDVYRSSKKADTYLYLPHGNEFTDVPDVLLGQFGRAEKVLTINLANREQLARLTVEKLQQHLHNDGFYLQLPPKREELQVNVNK.

Residues 1 to 85 (MLCDVYRSSK…KREELQVNVN (85 aa)) enclose the YcgL domain.

This chain is YcgL domain-containing protein IL1825, found in Idiomarina loihiensis (strain ATCC BAA-735 / DSM 15497 / L2-TR).